The sequence spans 430 residues: Lipoyl synthase, mitochondrial (430 aa).

Residues 1–37 (MAASTGKLRTLFSAHSSLSARPSSALPALRLTILRSY) constitute a mitochondrion transit peptide. A compositionally biased stretch (low complexity) spans 40 to 56 (TTPPDSSISDPSNSSTT). The interval 40–63 (TTPPDSSISDPSNSSTTVKRPPTA) is disordered. Residues C141, C146, C152, C172, C176, C179, and S387 each contribute to the [4Fe-4S] cluster site. The Radical SAM core domain occupies 155–376 (GSSKSAATAT…KERALEMGFL (222 aa)).

Belongs to the radical SAM superfamily. Lipoyl synthase family. [4Fe-4S] cluster is required as a cofactor.

The protein resides in the mitochondrion. The enzyme catalyses [[Fe-S] cluster scaffold protein carrying a second [4Fe-4S](2+) cluster] + N(6)-octanoyl-L-lysyl-[protein] + 2 oxidized [2Fe-2S]-[ferredoxin] + 2 S-adenosyl-L-methionine + 4 H(+) = [[Fe-S] cluster scaffold protein] + N(6)-[(R)-dihydrolipoyl]-L-lysyl-[protein] + 4 Fe(3+) + 2 hydrogen sulfide + 2 5'-deoxyadenosine + 2 L-methionine + 2 reduced [2Fe-2S]-[ferredoxin]. Its pathway is protein modification; protein lipoylation via endogenous pathway; protein N(6)-(lipoyl)lysine from octanoyl-[acyl-carrier-protein]: step 2/2. In terms of biological role, catalyzes the radical-mediated insertion of two sulfur atoms into the C-6 and C-8 positions of the octanoyl moiety bound to the lipoyl domains of lipoate-dependent enzymes, thereby converting the octanoylated domains into lipoylated derivatives. The sequence is that of Lipoyl synthase, mitochondrial from Ajellomyces dermatitidis (strain ER-3 / ATCC MYA-2586) (Blastomyces dermatitidis).